We begin with the raw amino-acid sequence, 627 residues long: 5-aminolevulinate synthase, non-specific, mitochondrial (627 aa).

The N-terminal 58 residues, 1-58 (MDVIVRRCPFLARVPQAFFQQSKKSLAVYAQRCPFMMELASKPMAPSLARALCSSSSS), are a transit peptide targeting the mitochondrion. Residues R204, S321, and K340 each contribute to the substrate site. Residues S373, H401, and T429 each contribute to the pyridoxal 5'-phosphate site. Residue K432 is part of the active site. K432 carries the N6-(pyridoxal phosphate)lysine modification. T461 and T462 together coordinate pyridoxal 5'-phosphate. Residue T549 participates in substrate binding.

The protein belongs to the class-II pyridoxal-phosphate-dependent aminotransferase family. Homodimer. Requires pyridoxal 5'-phosphate as cofactor.

Its subcellular location is the mitochondrion inner membrane. The enzyme catalyses succinyl-CoA + glycine + H(+) = 5-aminolevulinate + CO2 + CoA. It participates in porphyrin-containing compound metabolism; protoporphyrin-IX biosynthesis; 5-aminolevulinate from glycine: step 1/1. Catalyzes the pyridoxal 5'-phosphate (PLP)-dependent condensation of succinyl-CoA and glycine to form aminolevulinic acid (ALA), with CoA and CO2 as by-products. This Opsanus tau (Oyster toadfish) protein is 5-aminolevulinate synthase, non-specific, mitochondrial (alas1).